Reading from the N-terminus, the 289-residue chain is MQIDGYTRLAAVVATPIKHSISPFIHNYAFEKTGINGVYVAWDIPESELQVTLKNIMRYDMFGINISMPYKQAVIPYLDEVTKAADLIGAVNTIVNRDGRLIGYNTDGFGFFKSLGTFADFDVADKVITILGGGGAATAIIAQAAINGAKKINIFNQTAFLEETKEKAKQISSKTGAAIEVFPVEDLNMIQKKVLVSDLFVNATNVGMDGKSMIINDSFEFPPNLMVADVIYQPFETPFLRLVRSRGLKAVNGLGMLLFQAAAAFELWTGKEMPSQEIWQALEKKYKSK.

Residues 20–22 and Ser67 each bind shikimate; that span reads SIS. Lys71 functions as the Proton acceptor in the catalytic mechanism. The shikimate site is built by Asn92 and Asp107. Residues 132–136 and Val230 each bind NADP(+); that span reads GGGGA. Position 232 (Tyr232) interacts with shikimate. Gly253 is a binding site for NADP(+).

It belongs to the shikimate dehydrogenase family. Homodimer.

It catalyses the reaction shikimate + NADP(+) = 3-dehydroshikimate + NADPH + H(+). It participates in metabolic intermediate biosynthesis; chorismate biosynthesis; chorismate from D-erythrose 4-phosphate and phosphoenolpyruvate: step 4/7. Involved in the biosynthesis of the chorismate, which leads to the biosynthesis of aromatic amino acids. Catalyzes the reversible NADPH linked reduction of 3-dehydroshikimate (DHSA) to yield shikimate (SA). The protein is Shikimate dehydrogenase (NADP(+)) of Streptococcus mutans serotype c (strain ATCC 700610 / UA159).